The chain runs to 272 residues: Glutamate 5-kinase (272 aa).

Lys15 is a binding site for ATP. Substrate is bound by residues Ser55, Asp142, and Asn158. ATP contacts are provided by residues 178 to 179 (SD) and 220 to 226 (TGGMLSK).

This sequence belongs to the glutamate 5-kinase family.

It is found in the cytoplasm. The catalysed reaction is L-glutamate + ATP = L-glutamyl 5-phosphate + ADP. Its pathway is amino-acid biosynthesis; L-proline biosynthesis; L-glutamate 5-semialdehyde from L-glutamate: step 1/2. In terms of biological role, catalyzes the transfer of a phosphate group to glutamate to form L-glutamate 5-phosphate. The chain is Glutamate 5-kinase from Streptococcus equi subsp. zooepidemicus (strain H70).